A 243-amino-acid chain; its full sequence is UPF0246 protein M28_Spy1772 (243 aa).

It belongs to the UPF0246 family.

In Streptococcus pyogenes serotype M28 (strain MGAS6180), this protein is UPF0246 protein M28_Spy1772.